The primary structure comprises 322 residues: MARNKIALIGSGMIGGTLAHMIGLKDLGDVVLFDIAEGIPQGKGLDIAQSSPVDGFDSRLTGVNDYAGIEGADVCIVTAGVPRKPGMSRDDLLGINLKVMEQVGAGLKKYAPKAFVICITNPLDAMVWALQKFSGLPKTHVVGMAGVLDSARFRYFLAEEFKVSVEDVTAFVLGGHGDSMVPMIRYSTVSGIPLPDLVKMGWTSKEKLDQIVQRTRDGGAEIVGLLKTGSAYYAPAASAIAMAESYLKDKKRVLPCAAHLSGQYGVKGTYVGVPVVIGAGGVERIIEIDLNKSEQKMFESSVATVQGLTEACVKIAPQLASK.

NAD(+) contacts are provided by residues 10–15 (GSGMIG) and Asp-34. Residues Arg-83 and Arg-89 each contribute to the substrate site. NAD(+) contacts are provided by residues Asn-96 and 119 to 121 (ITN). Positions 121 and 152 each coordinate substrate. Residue His-176 is the Proton acceptor of the active site.

The protein belongs to the LDH/MDH superfamily. MDH type 3 family.

The enzyme catalyses (S)-malate + NAD(+) = oxaloacetate + NADH + H(+). Its function is as follows. Catalyzes the reversible oxidation of malate to oxaloacetate. In Mesorhizobium japonicum (strain LMG 29417 / CECT 9101 / MAFF 303099) (Mesorhizobium loti (strain MAFF 303099)), this protein is Malate dehydrogenase.